Consider the following 205-residue polypeptide: NADH-quinone oxidoreductase subunit C (205 aa).

The protein belongs to the complex I 30 kDa subunit family. In terms of assembly, NDH-1 is composed of 14 different subunits. Subunits NuoB, C, D, E, F, and G constitute the peripheral sector of the complex.

Its subcellular location is the cell inner membrane. It catalyses the reaction a quinone + NADH + 5 H(+)(in) = a quinol + NAD(+) + 4 H(+)(out). NDH-1 shuttles electrons from NADH, via FMN and iron-sulfur (Fe-S) centers, to quinones in the respiratory chain. The immediate electron acceptor for the enzyme in this species is believed to be ubiquinone. Couples the redox reaction to proton translocation (for every two electrons transferred, four hydrogen ions are translocated across the cytoplasmic membrane), and thus conserves the redox energy in a proton gradient. This is NADH-quinone oxidoreductase subunit C from Nitrosospira multiformis (strain ATCC 25196 / NCIMB 11849 / C 71).